Consider the following 457-residue polypeptide: Siroheme synthase (457 aa).

The precorrin-2 dehydrogenase /sirohydrochlorin ferrochelatase stretch occupies residues 1-204 (MDHLPIFCQL…NDQKAITETT (204 aa)). NAD(+) contacts are provided by residues 22–23 (DV) and 43–44 (LA). S128 carries the phosphoserine modification. Positions 216 to 457 (GEVVLVGAGP…RDKLNWFSNH (242 aa)) are uroporphyrinogen-III C-methyltransferase. P225 is an S-adenosyl-L-methionine binding site. The Proton acceptor role is filled by D248. The Proton donor role is filled by K270. Residues 301–303 (GGD), I306, 331–332 (TA), M382, and G411 each bind S-adenosyl-L-methionine.

This sequence in the N-terminal section; belongs to the precorrin-2 dehydrogenase / sirohydrochlorin ferrochelatase family. The protein in the C-terminal section; belongs to the precorrin methyltransferase family.

It catalyses the reaction uroporphyrinogen III + 2 S-adenosyl-L-methionine = precorrin-2 + 2 S-adenosyl-L-homocysteine + H(+). The enzyme catalyses precorrin-2 + NAD(+) = sirohydrochlorin + NADH + 2 H(+). The catalysed reaction is siroheme + 2 H(+) = sirohydrochlorin + Fe(2+). The protein operates within cofactor biosynthesis; adenosylcobalamin biosynthesis; precorrin-2 from uroporphyrinogen III: step 1/1. Its pathway is cofactor biosynthesis; adenosylcobalamin biosynthesis; sirohydrochlorin from precorrin-2: step 1/1. It participates in porphyrin-containing compound metabolism; siroheme biosynthesis; precorrin-2 from uroporphyrinogen III: step 1/1. It functions in the pathway porphyrin-containing compound metabolism; siroheme biosynthesis; siroheme from sirohydrochlorin: step 1/1. The protein operates within porphyrin-containing compound metabolism; siroheme biosynthesis; sirohydrochlorin from precorrin-2: step 1/1. In terms of biological role, multifunctional enzyme that catalyzes the SAM-dependent methylations of uroporphyrinogen III at position C-2 and C-7 to form precorrin-2 via precorrin-1. Then it catalyzes the NAD-dependent ring dehydrogenation of precorrin-2 to yield sirohydrochlorin. Finally, it catalyzes the ferrochelation of sirohydrochlorin to yield siroheme. This chain is Siroheme synthase, found in Escherichia coli (strain 55989 / EAEC).